We begin with the raw amino-acid sequence, 241 residues long: Thyroid transcription factor 1-associated protein 26 (241 aa).

Disordered regions lie at residues 1–22 (MAPV…GEGV) and 182–205 (KRAA…RQYK). Over residues 186–202 (KKQEFERRKQEREEAQR) the composition is skewed to basic and acidic residues.

This sequence belongs to the TAP26 family. Interacts with NKX2-1. Ubiquitously expressed. In lung, expression is restricted to the alveolar epithelial cells.

The protein resides in the nucleus. In terms of biological role, component of the transcription complexes of the pulmonary surfactant-associated protein-B (SFTPB) and -C (SFTPC). Enhances homeobox protein Nkx-2.1-activated SFTPB and SFTPC promoter activities. This Homo sapiens (Human) protein is Thyroid transcription factor 1-associated protein 26 (CCDC59).